Here is a 258-residue protein sequence, read N- to C-terminus: Short-chain dehydrogenase/reductase olcF (258 aa).

3 residues coordinate NADP(+): Val12, Asp58, and Arg120. Residue Ser138 is the Proton donor of the active site. Residues Tyr152, Lys156, and Val185 each coordinate NADP(+). Residue Tyr152 is the Proton acceptor of the active site. Lys156 serves as the catalytic Lowers pKa of active site Tyr.

The protein belongs to the short-chain dehydrogenases/reductases (SDR) family.

It functions in the pathway secondary metabolite biosynthesis; terpenoid biosynthesis. In terms of biological role, short-chain dehydrogenase/reductase; part of the gene cluster that mediates the biosynthesis of 15-deoxyoxalicine B. The first step of the pathway is the synthesis of nicotinyl-CoA from nicotinic acid by the nicotinic acid-CoA ligase olcI. Nicotinyl-CoA is then a substrate of polyketide synthase olcA to produce 4-hydroxy-6-(3-pyridinyl)-2H-pyran-2-one (HPPO) which is further prenylated by the polyprenyl transferase olcH to yield geranylgeranyl-HPPO. Geranylgeranyl pyrophosphate is provided by the cluster-specific geranylgeranyl pyrophosphate synthase olcC. The FAD-dependent monooxygenase olcE catalyzes the epoxidation of geranylgeranyl-HPPO and the terpene cyclase olcD catalyzes the cyclization of the terpenoid component, resulting in the formation of the tricyclic terpene moiety seen in predecaturin E. The cytochrome P450 monooxygenase then catalyzes the allylic oxidation of predecaturin E, which is followed by spirocylization with concomitant loss of one molecule of water to form decaturin E. Decaturin E is the substrate of the cytochrome P450 monooxygenase olcJ which hydroxylates it at the C-29 position to form decaturin F. The short-chain dehydrogenase/reductase olcF may catalyze the oxidation of decaturin F to generate the 29-hydroxyl-27-one intermediate, and subsequent hemiacetal formation probably leads to the formation of decaturin C. The dioxygenase olcK may be a peroxisomal enzyme that catalyzes the hydroxylation of decaturin C into decaturin A once decaturin C is shuttled into the peroxisome by the MFS transporter olcL. Finally the cytochrome P450 monooxygenase olcB catalyzes the oxidative rearrangement to yield 15-deoxyoxalicine B. In the absence of olcJ, decaturin E may be shunted to a pathway in which it is oxidized to a ketone, possibly by olcF, to form decaturin D, which undergoes further allylic oxidation to yield decaturin G. Moreover, in the absence of oclK or oclL, oclB can convert decaturin C into 15-deoxyoxalicine A. This Penicillium canescens protein is Short-chain dehydrogenase/reductase olcF.